The sequence spans 298 residues: Acetylglutamate kinase (298 aa).

Substrate is bound by residues 69–70 (GG), R91, and N191.

Belongs to the acetylglutamate kinase family. ArgB subfamily.

It localises to the cytoplasm. The enzyme catalyses N-acetyl-L-glutamate + ATP = N-acetyl-L-glutamyl 5-phosphate + ADP. It participates in amino-acid biosynthesis; L-arginine biosynthesis; N(2)-acetyl-L-ornithine from L-glutamate: step 2/4. Functionally, catalyzes the ATP-dependent phosphorylation of N-acetyl-L-glutamate. This is Acetylglutamate kinase from Neisseria meningitidis serogroup A / serotype 4A (strain DSM 15465 / Z2491).